A 480-amino-acid chain; its full sequence is Protein nucleotidyltransferase YdiU (480 aa).

ATP is bound by residues glycine 86, glycine 88, arginine 89, lysine 109, aspartate 121, glycine 122, arginine 172, and arginine 179. Catalysis depends on aspartate 248, which acts as the Proton acceptor. Residues asparagine 249 and aspartate 258 each contribute to the Mg(2+) site. Aspartate 258 is an ATP binding site.

This sequence belongs to the SELO family. Mg(2+) serves as cofactor. Requires Mn(2+) as cofactor.

It carries out the reaction L-seryl-[protein] + ATP = 3-O-(5'-adenylyl)-L-seryl-[protein] + diphosphate. It catalyses the reaction L-threonyl-[protein] + ATP = 3-O-(5'-adenylyl)-L-threonyl-[protein] + diphosphate. The catalysed reaction is L-tyrosyl-[protein] + ATP = O-(5'-adenylyl)-L-tyrosyl-[protein] + diphosphate. The enzyme catalyses L-histidyl-[protein] + UTP = N(tele)-(5'-uridylyl)-L-histidyl-[protein] + diphosphate. It carries out the reaction L-seryl-[protein] + UTP = O-(5'-uridylyl)-L-seryl-[protein] + diphosphate. It catalyses the reaction L-tyrosyl-[protein] + UTP = O-(5'-uridylyl)-L-tyrosyl-[protein] + diphosphate. Nucleotidyltransferase involved in the post-translational modification of proteins. It can catalyze the addition of adenosine monophosphate (AMP) or uridine monophosphate (UMP) to a protein, resulting in modifications known as AMPylation and UMPylation. The polypeptide is Protein nucleotidyltransferase YdiU (Salmonella arizonae (strain ATCC BAA-731 / CDC346-86 / RSK2980)).